Reading from the N-terminus, the 70-residue chain is Beta-defensin 131B (70 aa).

A signal peptide spans 1–22; that stretch reads MRVLFFVFGVLSLMSTVPPTRS. Disulfide bonds link C29/C56, C36/C50, and C40/C57.

The protein belongs to the beta-defensin family.

The protein localises to the secreted. Its function is as follows. Has antibacterial activity. This Homo sapiens (Human) protein is Beta-defensin 131B.